The following is a 598-amino-acid chain: MDLMVSTSSAQEGFCLIQQFHREYKRGNKLDVSCRTSGSISSKIPLGSRKRNRLVLVSAASKVESSGLNGRAQKFETLSSGYSNSNGNGHYSSVNSSFALEDVESNNHLRQMVRTGELEEGFKFLENMVYHGNVPDIIPCTTLIRGFCRLGKTRKAAKILEILEGSGAVPDVITYNVMISGYCKAGEINNALSVLDRMSVSPDVVTYNTILRSLCDSGKLKQAMEVLDRMLQRDCYPDVITYTILIEATCRDSGVGHAMKLLDEMRDRGCTPDVVTYNVLVNGICKEGRLDEAIKFLNDMPSSGCQPNVITHNIILRSMCSTGRWMDAEKLLADMLRKGFSPSVVTFNILINFLCRKGLLGRAIDILEKMPQHGCQPNSLSYNPLLHGFCKEKKMDRAIEYLERMVSRGCYPDIVTYNTMLTALCKDGKVEDAVEILNQLSSKGCSPVLITYNTVIDGLAKAGKTGKAIKLLDEMRAKDLKPDTITYSSLVGGLSREGKVDEAIKFFHEFERMGIRPNAVTFNSIMLGLCKSRQTDRAIDFLVFMINRGCKPNETSYTILIEGLAYEGMAKEALELLNELCNKGLMKKSSAEQVAGKM.

14 PPR repeats span residues 101–135 (EDVE…GNVP), 136–170 (DIIP…GAVP), 171–201 (DVIT…MSVS), 203–237 (DVVT…DCYP), 238–272 (DVIT…GCTP), 273–307 (DVVT…GCQP), 308–342 (NVIT…GFSP), 343–377 (SVVT…GCQP), 378–412 (NSLS…GCYP), 413–447 (DIVT…GCSP), 448–482 (VLIT…DLKP), 483–517 (DTIT…GIRP), 518–552 (NAVT…GCKP), and 553–587 (NETS…GLMK).

It belongs to the PPR family. P subfamily.

The sequence is that of Pentatricopeptide repeat-containing protein At1g09900 from Arabidopsis thaliana (Mouse-ear cress).